A 396-amino-acid polypeptide reads, in one-letter code: Gap junction gamma-1 protein (396 aa).

Over 1–18 (MSWSFLTRLLEEIHNHST) the chain is Cytoplasmic. The helical transmembrane segment at 19–39 (FVGKIWLTVLIVFRIVLTAVG) threads the bilayer. The Extracellular segment spans residues 40 to 75 (GESIYYDEQSKFVCNTEQPGCENVCYDAFAPLSHVR). Residues 76–96 (FWVFQIILVATPSVMYLGYAI) form a helical membrane-spanning segment. The Cytoplasmic portion of the chain corresponds to 97–175 (HKIAKMEHGE…RRIREDGLMK (79 aa)). A disordered region spans residues 145–165 (ELESEKENKEQSQPKPKHDGR). The segment covering 147–156 (ESEKENKEQS) has biased composition (basic and acidic residues). A helical transmembrane segment spans residues 176–198 (IYVLQLLARTVFEVGFLIGQYFL). The Extracellular segment spans residues 199-229 (YGFQVHPFYVCSRLPCPHKIDCFISRPTEKT). A helical transmembrane segment spans residues 230 to 250 (IFLLIMYGVTGLCLLLNIWEM). The Cytoplasmic segment spans residues 251-396 (LHLGFGTIRD…SGDGKTSVWI (146 aa)). A coiled-coil region spans residues 303–358 (ELSNAKIAYKQNKANIAQEQQYGSHEEHLPADLETLQREIRMAQERLDLAIQAYHH). Residues 357 to 396 (HHQNNPHGPREKKAKVGSKSGSNKSSISSKSGDGKTSVWI) are disordered. Over residues 373–396 (GSKSGSNKSSISSKSGDGKTSVWI) the composition is skewed to low complexity.

The protein belongs to the connexin family. Gamma-type subfamily. As to quaternary structure, a connexon is composed of a hexamer of connexins. Interacts with CNST.

It is found in the cell membrane. It localises to the cell junction. Its subcellular location is the gap junction. Functionally, one gap junction consists of a cluster of closely packed pairs of transmembrane channels, the connexons, through which materials of low MW diffuse from one cell to a neighboring cell. In Cricetulus griseus (Chinese hamster), this protein is Gap junction gamma-1 protein (GJC1).